Reading from the N-terminus, the 161-residue chain is UPF0178 protein Rsph17025_3122 (161 aa).

It belongs to the UPF0178 family.

The polypeptide is UPF0178 protein Rsph17025_3122 (Cereibacter sphaeroides (strain ATCC 17025 / ATH 2.4.3) (Rhodobacter sphaeroides)).